We begin with the raw amino-acid sequence, 728 residues long: 1,4-alpha-glucan branching enzyme GlgB (728 aa).

Aspartate 405 (nucleophile) is an active-site residue. Catalysis depends on glutamate 458, which acts as the Proton donor.

Belongs to the glycosyl hydrolase 13 family. GlgB subfamily. In terms of assembly, monomer.

It catalyses the reaction Transfers a segment of a (1-&gt;4)-alpha-D-glucan chain to a primary hydroxy group in a similar glucan chain.. It functions in the pathway glycan biosynthesis; glycogen biosynthesis. Catalyzes the formation of the alpha-1,6-glucosidic linkages in glycogen by scission of a 1,4-alpha-linked oligosaccharide from growing alpha-1,4-glucan chains and the subsequent attachment of the oligosaccharide to the alpha-1,6 position. The chain is 1,4-alpha-glucan branching enzyme GlgB from Serratia proteamaculans (strain 568).